The chain runs to 263 residues: Probable ribosomal RNA small subunit methyltransferase A (263 aa).

S-adenosyl-L-methionine is bound by residues L12, G37, E58, D83, and N100.

Belongs to the class I-like SAM-binding methyltransferase superfamily. rRNA adenine N(6)-methyltransferase family. RsmA subfamily.

It localises to the cytoplasm. Functionally, specifically dimethylates two adjacent adenosines in the loop of a conserved hairpin near the 3'-end of 16S rRNA in the 30S particle. May play a critical role in biogenesis of 30S subunits. The chain is Probable ribosomal RNA small subunit methyltransferase A from Methanococcus maripaludis (strain C7 / ATCC BAA-1331).